The chain runs to 956 residues: DNA repair endonuclease UVH1 (956 aa).

A Nuclear localization signal motif is present at residues 256–272; sequence RRQLDPIWHTLGKRTKQ. Disordered regions lie at residues 343-363, 516-593, and 697-718; these read HVKN…SVEA, TTDM…RPSG, and SSTE…GGRK. Over residues 697–711 the composition is skewed to polar residues; the sequence is SSTEFPASSTQNSLT. The ERCC4 domain occupies 725–805; sequence QVIVDMREFM…IPVLLIEFSQ (81 aa).

Belongs to the XPF family. As to quaternary structure, heterodimer with ERCC1/RAD10. Isoform 1 and isoform 2 are widely expressed, predominantly in flowers, meristems and stems. Isoform 3 is detected at low levels.

The protein localises to the nucleus. In terms of biological role, seems to be involved in nucleotide excision repair (NER) of damaged DNA (dark repair mechanism). Involved in repair of UV light, and probably oxidative damage. The UVH1/RAD1-ERCC1/RAD10 complex may act as an endonuclease making DNA incision 5' to the lesion site. In vitro, is implicated in double strand breaks (DSBs) repair and is required for homologous recombination in the presence of non-homologous overhangs. May mediate the induction of a DNA-damage sensitive cell-cycle checkpoint during the G2 phase. The sequence is that of DNA repair endonuclease UVH1 (UVH1) from Arabidopsis thaliana (Mouse-ear cress).